A 152-amino-acid polypeptide reads, in one-letter code: Dynein light chain Tctex-type protein 2B (152 aa).

The protein belongs to the dynein light chain Tctex-type family. As to quaternary structure, light chain of the cytoplasmic dynein complex 2, a multisubunit complex composed at least of eleven different proteins. The cytoplasmic dynein 2 complex consists of two catalytic heavy chains (HCs) and a number of non-catalytic subunits presented by intermediate chains (ICs), light intermediate chains (LICs) and light chains (LCs). Among them, a heavy chain (DYNC2H1), two intermediate chains (DYNC2I2 and DYNC2I1), a light intermediate chain (DYNC2LI1), and a light chain (DYNLT2B) are unique to the dynein-2 complex, but a subset of the light chains are also shared by dynein-1 and dynein-2 complexes. The dimer DYNLT2B-DYNLT1/DYNLT3 interacts with DYNC2I1; this interaction is crucial for retrograde trafficking of ciliary proteins.

It localises to the dynein axonemal particle. Functionally, acts as one of several non-catalytic accessory components of the cytoplasmic dynein 2 complex (dynein-2 complex), a motor protein complex that drives the movement of cargos along microtubules within cilia and flagella in concert with the intraflagellar transport (IFT) system. Required for proper retrograde ciliary transport. The protein is Dynein light chain Tctex-type protein 2B (DYNLT2B) of Bos taurus (Bovine).